The sequence spans 250 residues: Small ribosomal subunit protein uS2 (250 aa).

The protein belongs to the universal ribosomal protein uS2 family.

This Acidovorax ebreus (strain TPSY) (Diaphorobacter sp. (strain TPSY)) protein is Small ribosomal subunit protein uS2.